Reading from the N-terminus, the 132-residue chain is Putative nickel-responsive regulator (132 aa).

4 residues coordinate Ni(2+): His77, His88, His90, and Cys96.

Belongs to the transcriptional regulatory CopG/NikR family. Ni(2+) is required as a cofactor.

In terms of biological role, transcriptional regulator. This Brucella abortus (strain S19) protein is Putative nickel-responsive regulator.